A 748-amino-acid chain; its full sequence is Ribonucleoprotein PTB-binding 1 (748 aa).

A disordered region spans residues 1–42 (MAADVSVTHRPPLSPEAEAEAETPETVDRRTPEQELPPLDPE). An N-acetylalanine modification is found at alanine 2. Phosphoserine occurs at positions 6 and 14. Threonine 31 bears the Phosphothreonine mark. The Nuclear localization signal motif lies at 45–60 (RKRLEHTERQFRNRRK). RRM domains lie at 59 to 130 (RKIL…LQPT), 132 to 210 (ALLC…WTDA), and 221 to 299 (RCLC…FCAP). Residues 307–401 (LAALIAAQAT…QSQSQKKPGI (95 aa)) form an interaction with PTBP1 region. Disordered stretches follow at residues 390-505 (QSQS…GEPP), 525-647 (SNLA…PLSH), and 672-731 (KAVG…QHSQ). Threonine 469 is subject to Phosphothreonine. Residues serine 480, serine 576, serine 626, and serine 630 each carry the phosphoserine modification. The segment covering 675-685 (GSSPMGSSEGL) has biased composition (low complexity). Phosphoserine occurs at positions 716 and 720. Positions 743–746 (KRKR) match the Nuclear localization signal motif.

Interacts with PTBP1, RAVER2, VCL and ACTN1. Part of a complex containing RAVER1, VCL and ACTN1. As to expression, ubiquitous. Detected in aorta, brain, gut, heart, kidney, liver, spleen, uterus and skeletal muscle.

Its subcellular location is the nucleus. It is found in the cytoplasm. In terms of biological role, cooperates with PTBP1 to modulate regulated alternative splicing events. Promotes exon skipping. Cooperates with PTBP1 to modulate switching between mutually exclusive exons during maturation of the TPM1 pre-mRNA. The sequence is that of Ribonucleoprotein PTB-binding 1 (Raver1) from Rattus norvegicus (Rat).